We begin with the raw amino-acid sequence, 1208 residues long: DNA-directed RNA polymerase subunit beta (1208 aa).

The tract at residues 1182–1208 is disordered; sequence EKKAAEQVEDEKDDVIQNFETAEDNLD.

Belongs to the RNA polymerase beta chain family. The RNAP catalytic core consists of 2 alpha, 1 beta, 1 beta' and 1 omega subunit. When a sigma factor is associated with the core the holoenzyme is formed, which can initiate transcription.

The enzyme catalyses RNA(n) + a ribonucleoside 5'-triphosphate = RNA(n+1) + diphosphate. DNA-dependent RNA polymerase catalyzes the transcription of DNA into RNA using the four ribonucleoside triphosphates as substrates. This Enterococcus faecium (Streptococcus faecium) protein is DNA-directed RNA polymerase subunit beta.